The sequence spans 631 residues: Protelomerase (631 aa).

The DNA site is built by arginine 275, lysine 300, arginine 383, and histidine 416. Catalysis depends on tyrosine 425, which acts as the Nucleophile. A disordered region spans residues 533–592 (LPDEESVETIDEPDDESQDDELDEDEIELDEGGGDEPTEEEGPEEHQPTALKPVFKPAKN). Positions 534–575 (PDEESVETIDEPDDESQDDELDEDEIELDEGGGDEPTEEEGP) are enriched in acidic residues.

Belongs to the Caudoviricetes Protelomerase family. In terms of assembly, monomer. Homodimer; in presence of DNA.

Converts the circular intermediates produced by the viral replication and carrying a joined telomere site to a linear DNA molecule with covalently closed hairpin ends. The viral circular DNA is cleaved at a palindromic site called telRL thereby generating a linear prophage plasmid with telomeres. Binds covalently to the 3'-phosphoryl of the cleaved strands. The polypeptide is Protelomerase (Escherichia coli (Bacteriophage N15)).